The following is a 76-amino-acid chain: Small ribosomal subunit protein bS18 (76 aa).

This sequence belongs to the bacterial ribosomal protein bS18 family. As to quaternary structure, part of the 30S ribosomal subunit. Forms a tight heterodimer with protein bS6.

Binds as a heterodimer with protein bS6 to the central domain of the 16S rRNA, where it helps stabilize the platform of the 30S subunit. This is Small ribosomal subunit protein bS18 from Alcanivorax borkumensis (strain ATCC 700651 / DSM 11573 / NCIMB 13689 / SK2).